The following is a 270-amino-acid chain: uncharacterized protein (270 aa).

Disordered regions lie at residues 1 to 21 (MSTN…YEKP) and 53 to 77 (PNIL…AKLN). The span at 58-75 (SKHDGDKNKNDKKKEDAK) shows a compositional bias: basic and acidic residues. Residues 182–270 (EENKSREEKH…KIEDNLNTYE (89 aa)) are a coiled coil.

This is an uncharacterized protein from Plasmodium falciparum (isolate 3D7).